A 131-amino-acid polypeptide reads, in one-letter code: Protein GLUTAMINE DUMPER 5 (131 aa).

Over Met1–Tyr34 the chain is Extracellular. Residues Leu35–Cys55 traverse the membrane as a helical segment. The Cytoplasmic segment spans residues Ser56–His131. Residues Val88 to Gly92 carry the VIMAG motif.

This sequence belongs to the GLUTAMINE DUMPER 1 (TC 9.B.60) family. Expressed in the vascular tissues. Also detected in guard cells.

Its subcellular location is the membrane. In terms of biological role, probable subunit of an amino acid transporter involved in the regulation of the amino acid metabolism. Stimulates amino acid export by activating nonselective amino acid facilitators. The chain is Protein GLUTAMINE DUMPER 5 (GDU5) from Arabidopsis thaliana (Mouse-ear cress).